We begin with the raw amino-acid sequence, 898 residues long: Coatomer subunit gamma (898 aa).

HEAT repeat units follow at residues 62–99 (TEATDIFFAATKLFQSKDIPLRRLMYLLLKELSTISQD), 170–207 (EIVKRWANEVQEAISNKSNMVQYHALALLHRIKQHDRL), 280–317 (KEINSAVGVLQNFLNSTKPTLRFAAVRTLNKLAQTNPT), 319–352 (VIPCNLDMENLITDTNRSIATLAITTLLKVGNES), 353–389 (NVERLIKQIANFLGDINDEFKIVVVDAITSLSQKFPK), and 392–427 (KHLIIFLNKILRDEGTLQLKQATLDAILTVVNNIPE). The disordered stretch occupies residues 592 to 631 (GKSPFSTGASKKGDSVTGTPKSNNASNNNNNNEESSGPES). Residues 613 to 626 (SNNASNNNNNNEES) are compositionally biased toward low complexity.

Belongs to the COPG family. Oligomeric complex that consists of at least the alpha, beta, beta', gamma, delta, epsilon and zeta subunits.

The protein localises to the cytoplasm. It is found in the golgi apparatus membrane. It localises to the cytoplasmic vesicle. Its subcellular location is the COPI-coated vesicle membrane. Its function is as follows. The coatomer is a cytosolic protein complex that binds to dilysine motifs and reversibly associates with Golgi non-clathrin-coated vesicles, which further mediate biosynthetic protein transport from the ER, via the Golgi up to the trans Golgi network. Coatomer complex is required for budding from Golgi membranes, and is essential for the retrograde Golgi-to-ER transport of dilysine-tagged proteins. The protein is Coatomer subunit gamma (copG) of Dictyostelium discoideum (Social amoeba).